The chain runs to 102 residues: MATQKIRIRLKAYDSKLLDQSAGEIVETAKRTGAKVAGPIPLPTRINKFTVLRSPHVDKKSREQFEIRTHKRLLDILEPTQQTLDALMKLDLSAGVDVEIKS.

It belongs to the universal ribosomal protein uS10 family. Part of the 30S ribosomal subunit.

Functionally, involved in the binding of tRNA to the ribosomes. In Myxococcus xanthus (strain DK1622), this protein is Small ribosomal subunit protein uS10.